The following is a 393-amino-acid chain: NAD(P)H-quinone oxidoreductase subunit H, chloroplastic (393 aa).

This sequence belongs to the complex I 49 kDa subunit family. As to quaternary structure, NDH is composed of at least 16 different subunits, 5 of which are encoded in the nucleus.

Its subcellular location is the plastid. The protein localises to the chloroplast thylakoid membrane. The catalysed reaction is a plastoquinone + NADH + (n+1) H(+)(in) = a plastoquinol + NAD(+) + n H(+)(out). It carries out the reaction a plastoquinone + NADPH + (n+1) H(+)(in) = a plastoquinol + NADP(+) + n H(+)(out). Its function is as follows. NDH shuttles electrons from NAD(P)H:plastoquinone, via FMN and iron-sulfur (Fe-S) centers, to quinones in the photosynthetic chain and possibly in a chloroplast respiratory chain. The immediate electron acceptor for the enzyme in this species is believed to be plastoquinone. Couples the redox reaction to proton translocation, and thus conserves the redox energy in a proton gradient. This Amborella trichopoda protein is NAD(P)H-quinone oxidoreductase subunit H, chloroplastic.